Consider the following 689-residue polypeptide: Glycine--tRNA ligase beta subunit (689 aa).

Belongs to the class-II aminoacyl-tRNA synthetase family. In terms of assembly, tetramer of two alpha and two beta subunits.

The protein localises to the cytoplasm. It carries out the reaction tRNA(Gly) + glycine + ATP = glycyl-tRNA(Gly) + AMP + diphosphate. This is Glycine--tRNA ligase beta subunit from Acinetobacter baumannii (strain AB307-0294).